Consider the following 391-residue polypeptide: Multidrug resistance protein MdtL (391 aa).

Transmembrane regions (helical) follow at residues 4-24, 42-62, 69-89, 93-113, 131-151, 158-178, 203-222, 245-265, 269-289, 293-313, 331-351, and 356-376; these read FLIC…MYLV, IAFS…GKVA, PVAI…SLAE, LFLA…VVAF, LLNG…HLIM, SLFW…LFIL, FFLS…LTFV, ALTA…LGIF, TLMI…AVSP, VSLF…GVAM, LGIA…VVGI, and MLIG…MFVA.

This sequence belongs to the major facilitator superfamily. DHA1 family. MdtL (TC 2.A.1.2.22) subfamily.

The protein localises to the cell inner membrane. Functionally, confers resistance to chloramphenicol. The chain is Multidrug resistance protein MdtL from Escherichia coli O127:H6 (strain E2348/69 / EPEC).